The primary structure comprises 281 residues: MLYLIGLGLGDAKDITVKGLEVVRRCSRVYLEAYTSVLTVGKEALEEFYGRKLILADREEVEQEADNIFKDADVSDVAFLVVGDPFGATTHSDLILRATKLGIPYQVIHNASIMNAVGCCGLQLYRFGETVSIVFWTDTWRPESFFDKVKRNRANGMHTLCLLDIKVKEQSLENLIRGRKIYEPPRYMSVNQAAQQLLEIVQNHRARGEEPAITEETLCVGLARVGAEDQKIAAGTLQQMCTVSLGEPLHSLVITGGNLHPLEMEMLSLFSIPESQSTDGL.

Residues leucine 9, aspartate 84, glycine 87, 112 to 113 (SI), and leucine 163 contribute to the S-adenosyl-L-methionine site. Serine 171 is subject to Phosphoserine. S-adenosyl-L-methionine contacts are provided by valine 225 and histidine 250.

The protein belongs to the diphthine synthase family.

The enzyme catalyses 2-[(3S)-amino-3-carboxypropyl]-L-histidyl-[translation elongation factor 2] + 4 S-adenosyl-L-methionine = diphthine methyl ester-[translation elongation factor 2] + 4 S-adenosyl-L-homocysteine + 3 H(+). The protein operates within protein modification; peptidyl-diphthamide biosynthesis. S-adenosyl-L-methionine-dependent methyltransferase that catalyzes four methylations of the modified target histidine residue in translation elongation factor 2 (EF-2), to form an intermediate called diphthine methyl ester. The four successive methylation reactions represent the second step of diphthamide biosynthesis. This is Diphthine methyl ester synthase (Dph5) from Mus musculus (Mouse).